The primary structure comprises 184 residues: Oligoribonuclease (184 aa).

In terms of domain architecture, Exonuclease spans 7–170; the sequence is LIWIDLEMTG…DDIYESIEEL (164 aa). Tyr-128 is a catalytic residue.

Belongs to the oligoribonuclease family.

It localises to the cytoplasm. Its function is as follows. 3'-to-5' exoribonuclease specific for small oligoribonucleotides. In Hydrogenovibrio crunogenus (strain DSM 25203 / XCL-2) (Thiomicrospira crunogena), this protein is Oligoribonuclease.